The following is a 530-amino-acid chain: UDP-glucuronosyltransferase 2B17 (530 aa).

The N-terminal stretch at 1–23 (MPGKWISALLLLQISCCFQSGNC) is a signal peptide. A helical transmembrane segment spans residues 494–510 (VIGFLLTCSAVIAVLTV).

This sequence belongs to the UDP-glycosyltransferase family.

Its subcellular location is the endoplasmic reticulum membrane. The catalysed reaction is glucuronate acceptor + UDP-alpha-D-glucuronate = acceptor beta-D-glucuronoside + UDP + H(+). The enzyme catalyses 17alpha-estradiol + UDP-alpha-D-glucuronate = 17alpha-estradiol 3-O-(beta-D-glucuronate) + UDP + H(+). It carries out the reaction 17alpha-estradiol + UDP-alpha-D-glucuronate = 17alpha-estradiol 17-O-(beta-D-glucuronate) + UDP + H(+). It catalyses the reaction 17beta-estradiol + UDP-alpha-D-glucuronate = 17beta-estradiol 17-O-(beta-D-glucuronate) + UDP + H(+). The catalysed reaction is 17beta-hydroxy-5alpha-androstan-3-one + UDP-alpha-D-glucuronate = 5alpha-dihydrotestosterone 17-O-(beta-D-glucuronate) + UDP + H(+). The enzyme catalyses testosterone + UDP-alpha-D-glucuronate = testosterone 17-O-(beta-D-glucuronate) + UDP + H(+). UDP-glucuronosyltransferase (UGT) that catalyzes phase II biotransformation reactions in which lipophilic substrates are conjugated with glucuronic acid to increase the metabolite's water solubility, thereby facilitating excretion into either the urine or bile. Catalyzes the glucuronidation of endogenous steroid hormones such as androgens (epitestosterone, androsterone) and estrogens (estradiol, epiestradiol). This chain is UDP-glucuronosyltransferase 2B17, found in Rattus norvegicus (Rat).